Reading from the N-terminus, the 380-residue chain is GDSL esterase/lipase At3g26430 (380 aa).

A signal peptide spans 1–25 (METNLLLVKCVLLASCLIHPRACSP). Ser38 acts as the Nucleophile in catalysis. Asn97, Asn115, and Asn183 each carry an N-linked (GlcNAc...) asparagine glycan. Catalysis depends on residues Asp346 and His349.

Belongs to the 'GDSL' lipolytic enzyme family.

It is found in the secreted. The enzyme catalyses hexadecanoate ester + H2O = an aliphatic alcohol + hexadecanoate + H(+). It catalyses the reaction a butanoate ester + H2O = an aliphatic alcohol + butanoate + H(+). Lipase activity is inhibited by phenylmethylsulfonyl fluoride (PMSF), but not neostigmine bromide (NB). Its function is as follows. Lipase that can hydrolyze p-nitrophenyl butyrate and p-nitrophenyl palmitate in vitro. Possesses low activity against p-nitrophenyl acetate. Substrate preference is p-nitrophenyl palmitate &gt; p-nitrophenyl butyrate &gt;&gt; p-nitrophenyl acetate. Lacks cholinesterase activity. The sequence is that of GDSL esterase/lipase At3g26430 from Arabidopsis thaliana (Mouse-ear cress).